The following is a 301-amino-acid chain: XIAP-associated factor 1 (301 aa).

The TRAF-type zinc finger occupies 22 to 99 (LHEAYCLRFL…KLDMQLSKLE (78 aa)). Positions 189 to 257 (ILPSSLPSQA…KPRTSSPRGD (69 aa)) are disordered. Over residues 193–205 (SLPSQAAENQTST) the composition is skewed to polar residues.

Interacts with BIRC4; the interaction is not detected in. Interacts with BIRC1, BIRC2, BIRC3, BIRC7 and BIRC8. Part of an complex consisting of BIRC4, XAF1 and BIRC5; the complex formation requires IFN-beta stimulation. Interacts with RNF114, the interaction increases XAF1 stability and proapoptotic effects, and may regulate IFN signaling. In terms of tissue distribution, widely expressed. Expression is frequently down-regulated in cancer cell lines. Isoform 5 is widely expressed. Expressed in placenta (at protein level).

The protein localises to the cytoplasm. The protein resides in the nucleus. It localises to the mitochondrion. In terms of biological role, seems to function as a negative regulator of members of the IAP (inhibitor of apoptosis protein) family. Inhibits anti-caspase activity of BIRC4. Induces cleavage and inactivation of BIRC4 independent of caspase activation. Mediates TNF-alpha-induced apoptosis and is involved in apoptosis in trophoblast cells. May inhibit BIRC4 indirectly by activating the mitochondrial apoptosis pathway. After translocation to mitochondria, promotes translocation of BAX to mitochondria and cytochrome c release from mitochondria. Seems to promote the redistribution of BIRC4 from the cytoplasm to the nucleus, probably independent of BIRC4 inactivation which seems to occur in the cytoplasm. The BIRC4-XAF1 complex mediates down-regulation of BIRC5/survivin; the process requires the E3 ligase activity of BIRC4. Seems to be involved in cellular sensitivity to the proapoptotic actions of TRAIL. May be a tumor suppressor by mediating apoptosis resistance of cancer cells. This Homo sapiens (Human) protein is XIAP-associated factor 1 (XAF1).